A 192-amino-acid polypeptide reads, in one-letter code: Beta-glucosidase (192 aa).

This sequence belongs to the glycosyl hydrolase 3 family.

The catalysed reaction is Hydrolysis of terminal, non-reducing beta-D-glucosyl residues with release of beta-D-glucose.. Its pathway is glycan metabolism; cellulose degradation. The chain is Beta-glucosidase from Schizophyllum commune (Split gill fungus).